The sequence spans 477 residues: Transcription factor Sox-9-A (477 aa).

2 disordered regions span residues 1-66 (MNLL…ETED) and 157-274 (EAER…FRDV). Low complexity predominate over residues 27–42 (SDDSAGSPCPSGSGSD). Basic and acidic residues-rich tracts occupy residues 56-66 (GDQELKKETED) and 157-174 (EAER…DYKY). Lysine 61 participates in a covalent cross-link: Glycyl lysine isopeptide (Lys-Gly) (interchain with G-Cter in SUMO). Residues 63–103 (ETEDEKFPVCIREAVSQVLKGYDWTLVPMPVRVNGSSKNKP) are dimerization (DIM). Residues 63-103 (ETEDEKFPVCIREAVSQVLKGYDWTLVPMPVRVNGSSKNKP) are PQA. The segment at residues 105-173 (VKRPMNAFMV…QHKKDHPDYK (69 aa)) is a DNA-binding region (HMG box). Over residues 211-222 (SPHSSSSMSEVH) the composition is skewed to low complexity. The transactivation domain (TAM) stretch occupies residues 224–308 (PGEHSGQSQG…LPPNGHPGVG (85 aa)). 2 short sequence motifs (9aaTAD) span residues 276 to 285 (IGELSSEVIS) and 291 to 299 (DVNEFDQYL). The disordered stretch occupies residues 301–384 (PNGHPGVGST…SDQQQQHSPQ (84 aa)). 2 stretches are compositionally biased toward polar residues: residues 308–328 (GSTQ…SATT) and 346–361 (HSLS…SQQR). A transactivation domain (TAC) region spans residues 361–477 (RTHIKTEQLS…QPVYTQLTRP (117 aa)). Lysine 365 is covalently cross-linked (Glycyl lysine isopeptide (Lys-Gly) (interchain with G-Cter in SUMO)). Over residues 370 to 384 (SPSHYSDQQQQHSPQ) the composition is skewed to low complexity. The 9aaTAD 3 motif lies at 428–436 (SGLYSTFSY). The tract at residues 446–477 (TPIADTTGVPSIPQTHSPQHWEQPVYTQLTRP) is disordered. Over residues 453 to 477 (GVPSIPQTHSPQHWEQPVYTQLTRP) the composition is skewed to polar residues.

As to quaternary structure, interacts with the sumoylation factors ube2i/ubc9 and sumo1. Post-translationally, sumoylated. Lys-365 is the major site of sumoylation, although sumoylation at Lys-61 also occurs. Sumoylation plays a key role in regulating formation of the neural crest and otic placode. As to expression, from mid-gastrula (stage 10.5-11), expressed in a ring around the blastopore, with expression decreasing toward the dorsal side. At stage 12, expression around the blastopore decreases and begins to increase lateral to the neural plate in the presumptive neural crest, where expression dramatically increases around stage 14. Also expressed in the otic placode as early as stage 13/14. By the tailbud stage expression is restricted to the otic cup and then throughout the otic vesicle, with more intense staining at the dorsal-most region, the prospective region of the semicircular canals and endolymphatic duct. At the early tailbud stage (stage 23), expressed in migrating cranial neural crest cells and in the trunk neural crest. Also expressed in the genital ridges, developing eye, nasal placode and prospective pineal gland. Around stage 25, expression is down-regulated in the trunk neural crest but persists in the migrating cranial crest cells as they populate the pharyngeal arches, otic placode, developing eye, genital ridges and notochord. By stage 31, expression remains strong in the pharyngeal arches. Also expressed in the pancreas; first expressed at stage 25 in the pancreatic anlagen, dorsally in diverticulum. As development proceeds, expression continues in pancreatic tissue, being restricted to ventral and dorsal pancreatic buds.

It is found in the nucleus. It localises to the cytoplasm. In terms of biological role, transcription factor that plays a key role in chondrocytes differentiation and skeletal development. Specifically binds the 5'-ACAAAG-3' DNA motif present in enhancers and super-enhancers and promotes expression of genes important for chondrogenesis, including COL2A1. Plays a central role in successive steps of chondrocyte differentiation. Absolutely required for precartilaginous condensation, the first step in chondrogenesis during which skeletal progenitors differentiate into prechondrocytes. Together with SOX5 and SOX6, required for overt chondrogenesis when condensed prechondrocytes differentiate into early stage chondrocytes, the second step in chondrogenesis. Later, required to direct hypertrophic maturation and block osteoblast differentiation of growth plate chondrocytes: maintains chondrocyte columnar proliferation, delays prehypertrophy and then prevents osteoblastic differentiation of chondrocytes. Also required for chondrocyte hypertrophy, both indirectly, by keeping the lineage fate of chondrocytes, and directly, by remaining present in upper hypertrophic cells. Low lipid levels are the main nutritional determinant for chondrogenic commitment of skeletal progenitor cells: when lipids levels are low, FOXO transcription factors promote expression of SOX9, which induces chondrogenic commitment and suppresses fatty acid oxidation. In addition to cartilage development, also acts as a regulator of proliferation and differentiation in epithelial stem/progenitor cells. Involved in development of the cranial neural crest, which is fated to form skeletal elements. Also required for otic placode specification during inner ear development. This Xenopus laevis (African clawed frog) protein is Transcription factor Sox-9-A (sox9-a).